An 87-amino-acid chain; its full sequence is Small ribosomal subunit protein bS16c (87 aa).

This sequence belongs to the bacterial ribosomal protein bS16 family.

It localises to the plastid. It is found in the chloroplast. This is Small ribosomal subunit protein bS16c from Zygnema circumcarinatum (Green alga).